A 171-amino-acid chain; its full sequence is RxLR effector protein CRE7 (171 aa).

The first 23 residues, 1–23 (MRAIAILLAVVATIFASLHGVSA), serve as a signal peptide directing secretion. The RxLR-dEER signature appears at 46–59 (RRLRQTGDASDEER).

The protein belongs to the RxLR effector family.

The protein resides in the secreted. The protein localises to the host cell. In terms of biological role, effector that is involved in host plant infection. Contributes to virulence during the early infection stage, by inhibiting plant defense responses induced by both PAMP-triggered immunity (PTI) and effector-triggered immunity (ETI). This Phytophthora infestans (strain T30-4) (Potato late blight agent) protein is RxLR effector protein CRE7.